We begin with the raw amino-acid sequence, 231 residues long: MSMAGKNYRNASAKVNRAQEYELAEAIEKVKEITTTKFDATVDVAIKLGVDPRHADQVVRGTVMLPYGTGKTVSVLVVCKENKAEEAREAGADFVGFEDYIEKIQNGWTDVDVIVATPDVMGQLGKVARILGPRGLMPNPKSGTVTMDVAKAVKEVKAGKIEFRVDKAGNIHAPVGKVSFDSANLAGNITSFIKEVVRLKPSAAKGQYLQGITISSTMSPGVKVKKDKFVA.

This sequence belongs to the universal ribosomal protein uL1 family. Part of the 50S ribosomal subunit.

In terms of biological role, binds directly to 23S rRNA. The L1 stalk is quite mobile in the ribosome, and is involved in E site tRNA release. Its function is as follows. Protein L1 is also a translational repressor protein, it controls the translation of the L11 operon by binding to its mRNA. This is Large ribosomal subunit protein uL1 from Chlorobaculum tepidum (strain ATCC 49652 / DSM 12025 / NBRC 103806 / TLS) (Chlorobium tepidum).